We begin with the raw amino-acid sequence, 243 residues long: Venom nerve growth factor (243 aa).

Positions 1-18 (MSMLCYTLIIAFLIGIWA) are cleaved as a signal peptide. The propeptide occupies 19-125 (APKSEDNVPL…TLNRNIWANN (107 aa)). Residues 47 to 66 (GLKTSRNTDQHHPTPKKSED) show a composition bias toward basic and acidic residues. The disordered stretch occupies residues 47–70 (GLKTSRNTDQHHPTPKKSEDQELG). Intrachain disulfides connect Cys139–Cys204, Cys182–Cys232, and Cys192–Cys234. Asn148 carries an N-linked (GlcNAc...) asparagine glycan.

The protein belongs to the NGF-beta family. In terms of assembly, homodimer. As to expression, expressed by the venom gland.

The protein localises to the secreted. Nerve growth factor is important for the development and maintenance of the sympathetic and sensory nervous systems. It stimulates division and differentiation of sympathetic and embryonic sensory neurons as well as basal forebrain cholinergic neurons in the brain. Its relevance in the snake venom is not clear. However, it has been shown to inhibit metalloproteinase-dependent proteolysis of platelet glycoprotein Ib alpha, suggesting a metalloproteinase inhibition to prevent metalloprotease autodigestion and/or protection against prey proteases. Binds a lipid between the two protein chains in the homodimer. The lipid-bound form promotes histamine relase from mouse mast cells, contrary to the lipid-free form. In Bungarus multicinctus (Many-banded krait), this protein is Venom nerve growth factor.